Reading from the N-terminus, the 172-residue chain is 3-hydroxydecanoyl-[acyl-carrier-protein] dehydratase (172 aa).

Residue histidine 71 is part of the active site.

The protein belongs to the thioester dehydratase family. FabA subfamily. As to quaternary structure, homodimer.

Its subcellular location is the cytoplasm. It catalyses the reaction a (3R)-hydroxyacyl-[ACP] = a (2E)-enoyl-[ACP] + H2O. The catalysed reaction is (3R)-hydroxydecanoyl-[ACP] = (2E)-decenoyl-[ACP] + H2O. It carries out the reaction (2E)-decenoyl-[ACP] = (3Z)-decenoyl-[ACP]. The protein operates within lipid metabolism; fatty acid biosynthesis. Functionally, necessary for the introduction of cis unsaturation into fatty acids. Catalyzes the dehydration of (3R)-3-hydroxydecanoyl-ACP to E-(2)-decenoyl-ACP and then its isomerization to Z-(3)-decenoyl-ACP. Can catalyze the dehydratase reaction for beta-hydroxyacyl-ACPs with saturated chain lengths up to 16:0, being most active on intermediate chain length. The protein is 3-hydroxydecanoyl-[acyl-carrier-protein] dehydratase of Pseudoalteromonas atlantica (strain T6c / ATCC BAA-1087).